The chain runs to 416 residues: Multifunctional CCA protein (416 aa).

Positions 8 and 11 each coordinate ATP. Gly-8 and Arg-11 together coordinate CTP. 2 residues coordinate Mg(2+): Asp-21 and Asp-23. 3 residues coordinate ATP: Arg-91, Arg-137, and Arg-140. CTP contacts are provided by Arg-91, Arg-137, and Arg-140. Residues 228–329 (TGVHTLMVLA…VKIFDKADFW (102 aa)) enclose the HD domain.

This sequence belongs to the tRNA nucleotidyltransferase/poly(A) polymerase family. Bacterial CCA-adding enzyme type 1 subfamily. Monomer. Can also form homodimers and oligomers. It depends on Mg(2+) as a cofactor. Ni(2+) serves as cofactor.

The enzyme catalyses a tRNA precursor + 2 CTP + ATP = a tRNA with a 3' CCA end + 3 diphosphate. It catalyses the reaction a tRNA with a 3' CCA end + 2 CTP + ATP = a tRNA with a 3' CCACCA end + 3 diphosphate. Its function is as follows. Catalyzes the addition and repair of the essential 3'-terminal CCA sequence in tRNAs without using a nucleic acid template. Adds these three nucleotides in the order of C, C, and A to the tRNA nucleotide-73, using CTP and ATP as substrates and producing inorganic pyrophosphate. tRNA 3'-terminal CCA addition is required both for tRNA processing and repair. Also involved in tRNA surveillance by mediating tandem CCA addition to generate a CCACCA at the 3' terminus of unstable tRNAs. While stable tRNAs receive only 3'-terminal CCA, unstable tRNAs are marked with CCACCA and rapidly degraded. In Shewanella baltica (strain OS223), this protein is Multifunctional CCA protein.